The chain runs to 434 residues: Trigger factor (434 aa).

One can recognise a PPIase FKBP-type domain in the interval 161-246 (EDRVTVDFNG…LKKVEERELP (86 aa)).

This sequence belongs to the FKBP-type PPIase family. Tig subfamily.

It localises to the cytoplasm. The enzyme catalyses [protein]-peptidylproline (omega=180) = [protein]-peptidylproline (omega=0). Involved in protein export. Acts as a chaperone by maintaining the newly synthesized protein in an open conformation. Functions as a peptidyl-prolyl cis-trans isomerase. In Proteus mirabilis (strain HI4320), this protein is Trigger factor.